The sequence spans 266 residues: Tryptophan synthase alpha chain (266 aa).

Residues Glu-49 and Asp-60 each act as proton acceptor in the active site.

Belongs to the TrpA family. Tetramer of two alpha and two beta chains.

It catalyses the reaction (1S,2R)-1-C-(indol-3-yl)glycerol 3-phosphate + L-serine = D-glyceraldehyde 3-phosphate + L-tryptophan + H2O. It functions in the pathway amino-acid biosynthesis; L-tryptophan biosynthesis; L-tryptophan from chorismate: step 5/5. Functionally, the alpha subunit is responsible for the aldol cleavage of indoleglycerol phosphate to indole and glyceraldehyde 3-phosphate. In Thioalkalivibrio sulfidiphilus (strain HL-EbGR7), this protein is Tryptophan synthase alpha chain.